A 419-amino-acid chain; its full sequence is Tyrosine--tRNA ligase (419 aa).

L-tyrosine is bound at residue Y34. Positions 39-48 (PTADSLHLGN) match the 'HIGH' region motif. Residues Y169 and Q173 each coordinate L-tyrosine. The 'KMSKS' region motif lies at 229-233 (KFGKS). An ATP-binding site is contributed by K232. The S4 RNA-binding domain maps to 353 to 419 (LTLIELLISV…GKKKNFVLTY (67 aa)).

This sequence belongs to the class-I aminoacyl-tRNA synthetase family. TyrS type 1 subfamily. Homodimer.

The protein resides in the cytoplasm. The enzyme catalyses tRNA(Tyr) + L-tyrosine + ATP = L-tyrosyl-tRNA(Tyr) + AMP + diphosphate + H(+). Catalyzes the attachment of tyrosine to tRNA(Tyr) in a two-step reaction: tyrosine is first activated by ATP to form Tyr-AMP and then transferred to the acceptor end of tRNA(Tyr). This Lactococcus lactis subsp. cremoris (strain MG1363) protein is Tyrosine--tRNA ligase.